Here is a 378-residue protein sequence, read N- to C-terminus: UPF0754 membrane protein BCQ_0944 (378 aa).

2 helical membrane-spanning segments follow: residues Met1 to Thr21 and Tyr357 to Leu377.

Belongs to the UPF0754 family.

The protein localises to the cell membrane. The protein is UPF0754 membrane protein BCQ_0944 of Bacillus cereus (strain Q1).